Reading from the N-terminus, the 284-residue chain is 4-hydroxybenzoate octaprenyltransferase (284 aa).

The next 8 membrane-spanning stretches (helical) occupy residues 14-34 (VHQP…LWIT), 41-61 (FIVL…GCVI), 93-113 (WVFF…NNII), 134-154 (YIYL…LIVY), 166-186 (WLLF…YAMV), 209-229 (IVIG…GIVE), 233-253 (IIFY…QQVL), and 262-282 (CLWA…GIVL).

The protein belongs to the UbiA prenyltransferase family. The cofactor is Mg(2+).

It localises to the cell inner membrane. It carries out the reaction all-trans-octaprenyl diphosphate + 4-hydroxybenzoate = 4-hydroxy-3-(all-trans-octaprenyl)benzoate + diphosphate. Its pathway is cofactor biosynthesis; ubiquinone biosynthesis. Catalyzes the prenylation of para-hydroxybenzoate (PHB) with an all-trans polyprenyl group. Mediates the second step in the final reaction sequence of ubiquinone-8 (UQ-8) biosynthesis, which is the condensation of the polyisoprenoid side chain with PHB, generating the first membrane-bound Q intermediate 3-octaprenyl-4-hydroxybenzoate. The chain is 4-hydroxybenzoate octaprenyltransferase from Blochmanniella floridana.